Reading from the N-terminus, the 938-residue chain is Probable outer membrane protein pmp15 (938 aa).

Residues 1–17 (MRFFCFGMLLPFTFVLA) form the signal peptide. The Autotransporter domain occupies 659 to 938 (DEEKGHAASL…YLNVASRMRF (280 aa)).

Belongs to the PMP outer membrane protein family.

It is found in the secreted. The protein resides in the cell wall. The protein localises to the cell outer membrane. In Chlamydia pneumoniae (Chlamydophila pneumoniae), this protein is Probable outer membrane protein pmp15 (pmp15).